A 240-amino-acid chain; its full sequence is Probable peptide export permease protein YydJ (240 aa).

The next 6 membrane-spanning stretches (helical) occupy residues 13–33 (VIIILGAMFVFLFLLGYFLLV), 50–70 (SYTVATQFGLMLFSFVIAFFI), 97–117 (IAVLFLECFAFITLGLLIISL), 126–146 (ALLLFLFSAVILQYILIIGTI), 153–173 (ILISIGVSIVYWMTSVILVAI), and 210–230 (VLFIILYLVSIIIINAIVLRF).

As to quaternary structure, the complex is composed of 2 ATP-binding proteins (YydI), two transmembrane proteins (YydJ).

The protein resides in the cell membrane. Its function is as follows. Suggested to be part of an ABC transporter complex YydIJ involved in export of the modified peptide YydF. The sequence is that of Probable peptide export permease protein YydJ (yydJ) from Bacillus subtilis (strain 168).